A 490-amino-acid chain; its full sequence is Membrane-bound lytic murein transglycosylase F (490 aa).

An N-terminal signal peptide occupies residues 1 to 32 (MFALTAYRLRCAAWLLATGIFLLLAGCSEAKA). The tract at residues 33-269 (PTALERVQKE…RLKDRYYGHV (237 aa)) is non-LT domain. Residues 270 to 490 (DVLGYVGAYT…PEEDSGDEKL (221 aa)) are LT domain. Glutamate 316 is an active-site residue. The disordered stretch occupies residues 467–490 (AESGLHLPGVNKTRPEEDSGDEKL). Positions 479 to 490 (TRPEEDSGDEKL) are enriched in basic and acidic residues.

In the N-terminal section; belongs to the bacterial solute-binding protein 3 family. It in the C-terminal section; belongs to the transglycosylase Slt family.

It is found in the cell outer membrane. It catalyses the reaction Exolytic cleavage of the (1-&gt;4)-beta-glycosidic linkage between N-acetylmuramic acid (MurNAc) and N-acetylglucosamine (GlcNAc) residues in peptidoglycan, from either the reducing or the non-reducing ends of the peptidoglycan chains, with concomitant formation of a 1,6-anhydrobond in the MurNAc residue.. Murein-degrading enzyme that degrades murein glycan strands and insoluble, high-molecular weight murein sacculi, with the concomitant formation of a 1,6-anhydromuramoyl product. Lytic transglycosylases (LTs) play an integral role in the metabolism of the peptidoglycan (PG) sacculus. Their lytic action creates space within the PG sacculus to allow for its expansion as well as for the insertion of various structures such as secretion systems and flagella. The protein is Membrane-bound lytic murein transglycosylase F of Pseudomonas aeruginosa (strain ATCC 15692 / DSM 22644 / CIP 104116 / JCM 14847 / LMG 12228 / 1C / PRS 101 / PAO1).